Consider the following 37-residue polypeptide: Large ribosomal subunit protein bL36 (37 aa).

This sequence belongs to the bacterial ribosomal protein bL36 family.

In Janthinobacterium sp. (strain Marseille) (Minibacterium massiliensis), this protein is Large ribosomal subunit protein bL36.